We begin with the raw amino-acid sequence, 230 residues long: Large ribosomal subunit protein uL1 (230 aa).

This sequence belongs to the universal ribosomal protein uL1 family. As to quaternary structure, part of the 50S ribosomal subunit.

Its function is as follows. Binds directly to 23S rRNA. The L1 stalk is quite mobile in the ribosome, and is involved in E site tRNA release. Functionally, protein L1 is also a translational repressor protein, it controls the translation of the L11 operon by binding to its mRNA. This chain is Large ribosomal subunit protein uL1, found in Bifidobacterium adolescentis (strain ATCC 15703 / DSM 20083 / NCTC 11814 / E194a).